The sequence spans 147 residues: GLDGAQKTALKESWKVLGADGPTMMKNGSLLFGLLFKTYPDTKKHFKHFDDATFAAMDTTGVGKAHGVAVFSGLGSMICSIDDDDCVBGLAKKLSRNHLARGVSAADFKLLEAVFKZFLDEATQRKATDAQKDADGALLTMLIKAHV.

The Globin domain occupies 1-147 (GLDGAQKTAL…LLTMLIKAHV (147 aa)). Heme b contacts are provided by histidine 66 and histidine 98.

It belongs to the globin family. As to quaternary structure, homodimer.

Its subcellular location is the cytoplasm. This is Globin from Busycotypus canaliculatus (Channeled whelk).